A 200-amino-acid polypeptide reads, in one-letter code: ATP synthase subunit delta', mitochondrial (200 aa).

A mitochondrion-targeting transit peptide spans M1–F21.

The protein belongs to the ATPase epsilon chain family. In terms of assembly, F-type ATPases have 2 components, CF(1) - the catalytic core - and CF(0) - the membrane proton channel. CF(1) has five subunits: alpha(3), beta(3), gamma(1), delta(1), epsilon(1). CF(0) has three main subunits: a, b and c.

The protein resides in the mitochondrion. Its subcellular location is the mitochondrion inner membrane. Mitochondrial membrane ATP synthase (F(1)F(0) ATP synthase or Complex V) produces ATP from ADP in the presence of a proton gradient across the membrane which is generated by electron transport complexes of the respiratory chain. F-type ATPases consist of two structural domains, F(1) - containing the extramembraneous catalytic core, and F(0) - containing the membrane proton channel, linked together by a central stalk and a peripheral stalk. During catalysis, ATP turnover in the catalytic domain of F(1) is coupled via a rotary mechanism of the central stalk subunits to proton translocation. Part of the complex F(1) domain and of the central stalk which is part of the complex rotary element. Rotation of the central stalk against the surrounding alpha(3)beta(3) subunits leads to hydrolysis of ATP in three separate catalytic sites on the beta subunits. This chain is ATP synthase subunit delta', mitochondrial, found in Ipomoea batatas (Sweet potato).